Consider the following 178-residue polypeptide: Peptide methionine sulfoxide reductase MsrA (178 aa).

Cys-12 is an active-site residue.

It belongs to the MsrA Met sulfoxide reductase family.

It catalyses the reaction L-methionyl-[protein] + [thioredoxin]-disulfide + H2O = L-methionyl-(S)-S-oxide-[protein] + [thioredoxin]-dithiol. The enzyme catalyses [thioredoxin]-disulfide + L-methionine + H2O = L-methionine (S)-S-oxide + [thioredoxin]-dithiol. Has an important function as a repair enzyme for proteins that have been inactivated by oxidation. Catalyzes the reversible oxidation-reduction of methionine sulfoxide in proteins to methionine. The polypeptide is Peptide methionine sulfoxide reductase MsrA (Erwinia tasmaniensis (strain DSM 17950 / CFBP 7177 / CIP 109463 / NCPPB 4357 / Et1/99)).